Consider the following 117-residue polypeptide: Ribosome-binding factor A (117 aa).

Belongs to the RbfA family. Monomer. Binds 30S ribosomal subunits, but not 50S ribosomal subunits or 70S ribosomes.

It is found in the cytoplasm. In terms of biological role, one of several proteins that assist in the late maturation steps of the functional core of the 30S ribosomal subunit. Associates with free 30S ribosomal subunits (but not with 30S subunits that are part of 70S ribosomes or polysomes). Required for efficient processing of 16S rRNA. May interact with the 5'-terminal helix region of 16S rRNA. This chain is Ribosome-binding factor A, found in Bacillus licheniformis (strain ATCC 14580 / DSM 13 / JCM 2505 / CCUG 7422 / NBRC 12200 / NCIMB 9375 / NCTC 10341 / NRRL NRS-1264 / Gibson 46).